The following is a 352-amino-acid chain: Heat-inducible transcription repressor HrcA (352 aa).

It belongs to the HrcA family.

Functionally, negative regulator of class I heat shock genes (grpE-dnaK-dnaJ and groELS operons). Prevents heat-shock induction of these operons. This is Heat-inducible transcription repressor HrcA from Chlorobium phaeobacteroides (strain BS1).